We begin with the raw amino-acid sequence, 110 residues long: Small EDRK-rich factor 1 (110 aa).

A compositionally biased stretch (basic and acidic residues) spans Met-1–Ser-30. The interval Met-1–Arg-61 is disordered. Residues Arg-11–Lys-17 form a required for SNCA binding region. The span at Ser-34–Ser-50 shows a compositional bias: low complexity.

The protein belongs to the SERF family. As to quaternary structure, interacts with SNCA; this interaction promotes the aggregation of SNCA. In terms of tissue distribution, isoform Long is predominantly expressed in heart, brain and skeletal muscle. Isoform Short and Isoform Long are expressed throughout the central nervous system, including spinal cord.

The protein localises to the cytoplasm. It is found in the cytosol. It localises to the nucleus. Positive regulator of amyloid protein aggregation and proteotoxicity. Induces conformational changes in amyloid proteins, such as APP, HTT, and SNCA, driving them into compact formations preceding the formation of aggregates. This chain is Small EDRK-rich factor 1 (SERF1A), found in Homo sapiens (Human).